Consider the following 376-residue polypeptide: 26S proteasome non-ATPase regulatory subunit 4 (376 aa).

A VWFA domain is found at Ser-5–Ile-188. Lys-122 participates in a covalent cross-link: Glycyl lysine isopeptide (Lys-Gly) (interchain with G-Cter in SUMO2). Positions Leu-197–Lys-262 are interaction with UBQLN1. The region spanning Ser-211–Arg-230 is the UIM 1 domain. A compositionally biased stretch (basic and acidic residues) spans Met-224–Arg-237. The disordered stretch occupies residues Met-224–Asp-257. Phosphothreonine is present on residues Thr-250 and Thr-253. 2 positions are modified to phosphoserine: Ser-256 and Ala-259. The UIM 2 domain occupies Thr-282–Ser-301. Residues Met-355–Lys-376 form a disordered region. Ser-360 bears the Phosphoserine mark. The span at Lys-364 to Lys-376 shows a compositional bias: basic and acidic residues.

The protein belongs to the proteasome subunit S5A family. In terms of assembly, component of the 19S proteasome regulatory particle complex. The 26S proteasome consists of a 20S core particle (CP) and two 19S regulatory subunits (RP). The regulatory particle is made of a lid composed of 9 subunits, a base containing 6 ATPases and few additional components including PSMD4. Interacts with NUB1. Interacts with SQSTM1. Interacts with UBQLN4. Interacts with UBE3A. Interacts with UBQLN1 (via ubiquitin-like domain). Interacts with DDI2. As to expression, isoform Rpn10A is ubiquitous whereas isoform Rpn10E is mostly expressed in the embryonic brain.

Functionally, component of the 26S proteasome, a multiprotein complex involved in the ATP-dependent degradation of ubiquitinated proteins. This complex plays a key role in the maintenance of protein homeostasis by removing misfolded or damaged proteins, which could impair cellular functions, and by removing proteins whose functions are no longer required. Therefore, the proteasome participates in numerous cellular processes, including cell cycle progression, apoptosis, or DNA damage repair. PSMD4 acts as an ubiquitin receptor subunit through ubiquitin-interacting motifs and selects ubiquitin-conjugates for destruction. Displays a preferred selectivity for longer polyubiquitin chains. The chain is 26S proteasome non-ATPase regulatory subunit 4 (Psmd4) from Mus musculus (Mouse).